A 214-amino-acid polypeptide reads, in one-letter code: GTP cyclohydrolase 1 (214 aa).

Zn(2+)-binding residues include cysteine 108, histidine 111, and cysteine 179.

The protein belongs to the GTP cyclohydrolase I family. Toroid-shaped homodecamer, composed of two pentamers of five dimers.

It carries out the reaction GTP + H2O = 7,8-dihydroneopterin 3'-triphosphate + formate + H(+). It functions in the pathway cofactor biosynthesis; 7,8-dihydroneopterin triphosphate biosynthesis; 7,8-dihydroneopterin triphosphate from GTP: step 1/1. The sequence is that of GTP cyclohydrolase 1 from Shewanella loihica (strain ATCC BAA-1088 / PV-4).